The chain runs to 198 residues: Recombination protein RecR (198 aa).

The segment at 57–72 (CSVCGHITDKDPCYIC) adopts a C4-type zinc-finger fold. One can recognise a Toprim domain in the interval 80–175 (SVLCVVQESK…KVTRIAHGLP (96 aa)).

It belongs to the RecR family.

In terms of biological role, may play a role in DNA repair. It seems to be involved in an RecBC-independent recombinational process of DNA repair. It may act with RecF and RecO. The chain is Recombination protein RecR from Listeria innocua serovar 6a (strain ATCC BAA-680 / CLIP 11262).